The following is a 132-amino-acid chain: Small ribosomal subunit protein bS6 (132 aa).

It belongs to the bacterial ribosomal protein bS6 family.

Functionally, binds together with bS18 to 16S ribosomal RNA. The sequence is that of Small ribosomal subunit protein bS6 from Chlorobium chlorochromatii (strain CaD3).